The following is a 150-amino-acid chain: Large ribosomal subunit protein uL15 (150 aa).

It belongs to the universal ribosomal protein uL15 family. As to quaternary structure, part of the 50S ribosomal subunit.

In terms of biological role, binds to the 23S rRNA. The polypeptide is Large ribosomal subunit protein uL15 (Rickettsia prowazekii (strain Madrid E)).